The chain runs to 426 residues: Enolase (426 aa).

Q163 contributes to the (2R)-2-phosphoglycerate binding site. Residue E205 is the Proton donor of the active site. 3 residues coordinate Mg(2+): D242, E285, and D312. (2R)-2-phosphoglycerate-binding residues include K337, R366, S367, and K388. K337 (proton acceptor) is an active-site residue.

Belongs to the enolase family. Component of the RNA degradosome, a multiprotein complex involved in RNA processing and mRNA degradation. Mg(2+) is required as a cofactor.

The protein localises to the cytoplasm. It is found in the secreted. Its subcellular location is the cell surface. The enzyme catalyses (2R)-2-phosphoglycerate = phosphoenolpyruvate + H2O. It participates in carbohydrate degradation; glycolysis; pyruvate from D-glyceraldehyde 3-phosphate: step 4/5. In terms of biological role, catalyzes the reversible conversion of 2-phosphoglycerate (2-PG) into phosphoenolpyruvate (PEP). It is essential for the degradation of carbohydrates via glycolysis. The chain is Enolase from Nitrosococcus oceani (strain ATCC 19707 / BCRC 17464 / JCM 30415 / NCIMB 11848 / C-107).